Reading from the N-terminus, the 342-residue chain is Vancomycin B-type resistance protein VanB (342 aa).

Residues K132, 168-170 (FVK), 176-177 (SS), 206-213 (EQAISGCE), and F240 contribute to the ATP site. Residues 136–337 (YILTKNAGIA…LPALIDSLIT (202 aa)) enclose the ATP-grasp domain. Residue H243 coordinates substrate. An ATP-binding site is contributed by 303–304 (NE). Mg(2+) contacts are provided by E304 and N306.

Belongs to the D-alanine--D-alanine ligase family. It depends on Mg(2+) as a cofactor. Requires Mn(2+) as cofactor.

The protein localises to the cell membrane. The enzyme catalyses (R)-lactate + D-alanine + ATP = D-alanyl-(R)-lactate + ADP + phosphate. Required for high-level resistance to glycopeptides antibiotics. D-Ala--D-Ala ligase of altered specificity which catalyzes ester bond formation between D-Ala and various D-hydroxy acids; producing a peptidoglycan which does not terminate in D-alanine but in D-lactate, thus preventing vancomycin binding. The protein is Vancomycin B-type resistance protein VanB (vanB) of Enterococcus faecalis (strain ATCC 700802 / V583).